An 828-amino-acid polypeptide reads, in one-letter code: BEN domain-containing protein 3 (828 aa).

K20 is covalently cross-linked (Glycyl lysine isopeptide (Lys-Gly) (interchain with G-Cter in SUMO); alternate). Residue K20 forms a Glycyl lysine isopeptide (Lys-Gly) (interchain with G-Cter in SUMO1); alternate linkage. Residue K20 forms a Glycyl lysine isopeptide (Lys-Gly) (interchain with G-Cter in SUMO2); alternate linkage. Glycyl lysine isopeptide (Lys-Gly) (interchain with G-Cter in SUMO2) cross-links involve residues K41, K56, K58, K73, K128, K129, K137, K142, and K158. The Nuclear localization signal signature appears at 56-58 (KRK). The residue at position 164 (S164) is a Phosphoserine. A disordered region spans residues 164–184 (SPSSLRLLNEPQKRDCGSTGA). K176 participates in a covalent cross-link: Glycyl lysine isopeptide (Lys-Gly) (interchain with G-Cter in SUMO2). Residues 242–343 (PPPEYQLTAA…DFFSRFWAQR (102 aa)) form the BEN 1 domain. Phosphoserine is present on S379. One can recognise a BEN 2 domain in the interval 387–487 (ASDHVVDTQD…DELEGLGLDA (101 aa)). Residue K427 forms a Glycyl lysine isopeptide (Lys-Gly) (interchain with G-Cter in SUMO2) linkage. The tract at residues 483–504 (LGLDAGSEGDPPRDDCYDSSSL) is disordered. S489 carries the phosphoserine modification. K512 participates in a covalent cross-link: Glycyl lysine isopeptide (Lys-Gly) (interchain with G-Cter in SUMO); alternate. K512 participates in a covalent cross-link: Glycyl lysine isopeptide (Lys-Gly) (interchain with G-Cter in SUMO2); alternate. A Glycyl lysine isopeptide (Lys-Gly) (interchain with G-Cter in SUMO2) cross-link involves residue K528. Residues 548 to 650 (VPGADCLLSK…ERCRRRDTEQ (103 aa)) enclose the BEN 3 domain. K700 participates in a covalent cross-link: Glycyl lysine isopeptide (Lys-Gly) (interchain with G-Cter in SUMO2). Positions 715 to 816 (VPSPYLLSDK…ERCRRPNRKK (102 aa)) constitute a BEN 4 domain.

As to quaternary structure, homooligomer, probably a homooctamer. Interacts with HDAC2 and HDAC3, but not HDAC1. Interacts with SALL4. Interacts with SMARCA5/SNF2H, BAZ2A/TIP5 and USP21. Interacts with the nucleosome remodeling and histone deacetylase (NuRD) repressor complex. Interacts (via BEN domains 1 and 3) with ERCC6L (via N-terminal TPR repeat); the interaction is direct. In terms of processing, sumoylated at Lys-20 by SUMO1 and at Lys-512 by SUMO1, SUMO2 and SUMO3. Sumoylation probably occurs sequentially, with that of Lys-20 preceding that of Lys-512. It does not alter association with heterochromatin, but is required for the repression of transcription. In terms of tissue distribution, expressed at least in heart, kidney, liver, ovary and spleen, with highest levels in spleen and lowest in heart. Expressed on the surface of T-cells.

Its subcellular location is the nucleus. It localises to the nucleolus. In terms of biological role, transcriptional repressor which associates with the NoRC (nucleolar remodeling complex) complex and plays a key role in repressing rDNA transcription. The sumoylated form modulates the stability of the NoRC complex component BAZ2A/TIP5 by controlling its USP21-mediated deubiquitination. Binds to unmethylated major satellite DNA and is involved in the recruitment of the Polycomb repressive complex 2 (PRC2) to major satellites. Stimulates the ERCC6L translocase and ATPase activities. The polypeptide is BEN domain-containing protein 3 (BEND3) (Homo sapiens (Human)).